The sequence spans 299 residues: uncharacterized protein (299 aa).

This is an uncharacterized protein from Mycobacterium tuberculosis (strain CDC 1551 / Oshkosh).